The sequence spans 283 residues: Putative cytochrome b-c1 complex subunit Rieske-like protein 1 (283 aa).

The chain crosses the membrane as a helical span at residues 116 to 149 (TEARKGFSYLVTGVTTVGVAYAAKNAVTQFVSSM). In terms of domain architecture, Rieske spans 196-281 (EAAVELSQLR…YEFTSDDMVI (86 aa)). 4 residues coordinate [2Fe-2S] cluster: cysteine 226, histidine 228, cysteine 245, and histidine 248. Cysteines 231 and 247 form a disulfide.

Belongs to the Rieske iron-sulfur protein family. The cofactor is [2Fe-2S] cluster.

It is found in the membrane. The protein is Putative cytochrome b-c1 complex subunit Rieske-like protein 1 (UQCRFS1P1) of Homo sapiens (Human).